The sequence spans 31 residues: Cytochrome b6-f complex subunit 6 (31 aa).

The helical transmembrane segment at 4-24 threads the bilayer; that stretch reads ITSYFGFLLAALTITSALFIG.

This sequence belongs to the PetL family. The 4 large subunits of the cytochrome b6-f complex are cytochrome b6, subunit IV (17 kDa polypeptide, PetD), cytochrome f and the Rieske protein, while the 4 small subunits are PetG, PetL, PetM and PetN. The complex functions as a dimer.

The protein resides in the plastid. The protein localises to the chloroplast thylakoid membrane. Component of the cytochrome b6-f complex, which mediates electron transfer between photosystem II (PSII) and photosystem I (PSI), cyclic electron flow around PSI, and state transitions. PetL is important for photoautotrophic growth as well as for electron transfer efficiency and stability of the cytochrome b6-f complex. The protein is Cytochrome b6-f complex subunit 6 of Humulus lupulus (European hop).